The primary structure comprises 362 residues: MLSYNRFRGYLIPQIHALKLFRYASTASTSGEKIESSERPYDVGMLLRPKTKFEIKTYKPISPGLRHLKRPVSDYLWKGKPFRPLTVAKRKKGGRNETGRITVRHQGGGHKQRIRLVDFERKVPGVHRVIRIEYDPGRSGHIALVEKLNSETANKSYILACDGLREGDTVESFRSLLKTGSNGEPVEMDPVLAAEIEDGTFAAKNLKPGNCFPLRLIPIGTVIHAIGVNPNQKAKLCRSAGSSARIIAFDGKYAIVRLQSGEERKILDTSFATIGVVSNIYWQHRQLGKAGRSRWLGIRPTVRGTAMNPCDHPHGGGGGKSIGNKPSQSPWGVLAKGGYKTRRGKNVNKLLVRDRPRGKEKR.

A mitochondrion-targeting transit peptide spans 1-23; that stretch reads MLSYNRFRGYLIPQIHALKLFRY. Residues 306-362 form a disordered region; sequence AMNPCDHPHGGGGGKSIGNKPSQSPWGVLAKGGYKTRRGKNVNKLLVRDRPRGKEKR. Residues 351 to 362 are compositionally biased toward basic and acidic residues; sequence LVRDRPRGKEKR.

The protein belongs to the universal ribosomal protein uL2 family. Component of the mitochondrial large ribosomal subunit (mt-LSU). Mature yeast 74S mitochondrial ribosomes consist of a small (37S) and a large (54S) subunit. The 37S small subunit contains a 15S ribosomal RNA (15S mt-rRNA) and at least 32 different proteins. The 54S large subunit contains a 21S rRNA (21S mt-rRNA) and at least 45 different proteins. uL2m has a Na/K ligand binding site.

It localises to the mitochondrion. Functionally, component of the mitochondrial ribosome (mitoribosome), a dedicated translation machinery responsible for the synthesis of mitochondrial genome-encoded proteins, including at least some of the essential transmembrane subunits of the mitochondrial respiratory chain. The mitoribosomes are attached to the mitochondrial inner membrane and translation products are cotranslationally integrated into the membrane. The polypeptide is Large ribosomal subunit protein uL2m (rml2) (Schizosaccharomyces pombe (strain 972 / ATCC 24843) (Fission yeast)).